We begin with the raw amino-acid sequence, 200 residues long: 3-isopropylmalate dehydratase small subunit (200 aa).

Belongs to the LeuD family. LeuD type 1 subfamily. As to quaternary structure, heterodimer of LeuC and LeuD.

The enzyme catalyses (2R,3S)-3-isopropylmalate = (2S)-2-isopropylmalate. It participates in amino-acid biosynthesis; L-leucine biosynthesis; L-leucine from 3-methyl-2-oxobutanoate: step 2/4. Functionally, catalyzes the isomerization between 2-isopropylmalate and 3-isopropylmalate, via the formation of 2-isopropylmaleate. This chain is 3-isopropylmalate dehydratase small subunit, found in Actinobacillus pleuropneumoniae serotype 3 (strain JL03).